We begin with the raw amino-acid sequence, 430 residues long: Tol-Pal system protein TolB (430 aa).

An N-terminal signal peptide occupies residues 1-21 (MKQALRVAVSFFMLWAAVLHA).

The protein belongs to the TolB family. In terms of assembly, the Tol-Pal system is composed of five core proteins: the inner membrane proteins TolA, TolQ and TolR, the periplasmic protein TolB and the outer membrane protein Pal. They form a network linking the inner and outer membranes and the peptidoglycan layer.

Its subcellular location is the periplasm. Part of the Tol-Pal system, which plays a role in outer membrane invagination during cell division and is important for maintaining outer membrane integrity. TolB occupies a key intermediary position in the Tol-Pal system because it communicates directly with both membrane-embedded components, Pal in the outer membrane and TolA in the inner membrane. The polypeptide is Tol-Pal system protein TolB (Enterobacter sp. (strain 638)).